Consider the following 207-residue polypeptide: Cytidylate kinase (207 aa).

7-15 (GVAASGKSS) contributes to the ATP binding site.

This sequence belongs to the cytidylate kinase family. Type 1 subfamily.

Its subcellular location is the cytoplasm. The enzyme catalyses CMP + ATP = CDP + ADP. It catalyses the reaction dCMP + ATP = dCDP + ADP. The sequence is that of Cytidylate kinase from Deinococcus deserti (strain DSM 17065 / CIP 109153 / LMG 22923 / VCD115).